A 321-amino-acid chain; its full sequence is Torsin-2A (321 aa).

The signal sequence occupies residues 1–26 (MAAATRGCRPWGSLLGLLGLVSAAAA). Position 93 to 100 (93 to 100 (GWTGTGKS)) interacts with ATP. A glycan (N-linked (GlcNAc...) asparagine) is linked at Asn149.

This sequence belongs to the ClpA/ClpB family. Torsin subfamily. As to quaternary structure, homohexamer. Interacts with TOR1AIP1. Isoform 1 is expressed ubiquitously, except in cardiac and endothelial tissues.

It is found in the endoplasmic reticulum lumen. In Homo sapiens (Human), this protein is Torsin-2A (TOR2A).